The primary structure comprises 583 residues: Lamin-B3 (583 aa).

The disordered stretch occupies residues Met1–Glu30. Residues Ala2–Glu32 form a head region. The span at Ala15 to Ser26 shows a compositional bias: polar residues. At Ser21 the chain carries Phosphoserine. One can recognise an IF rod domain in the interval Glu30–Leu386. The interval Asp33–Glu67 is coil 1A. Positions Val68–Leu79 are linker 1. A coil 1B region spans residues Tyr80–Lys215. The linker 2 stretch occupies residues Glu216–Glu242. A coil 2 region spans residues Ala243 to Gln384. Positions Glu383 to Val431 are disordered. The segment at Arg385–Cys580 is tail. Positions Pro390–Arg408 are enriched in polar residues. Residue Ser391 is modified to Phosphoserine. An LTD domain is found at Tyr429–Arg546. Cys580 carries the post-translational modification Cysteine methyl ester. Cys580 carries S-farnesyl cysteine lipidation. A propeptide spans Ser581–Met583 (removed in mature form).

Belongs to the intermediate filament family. Post-translationally, phosphorylation plays a key role in lamin organization, subcellular localization and nuclear envelope disintegration. Phosphorylation by CDK1 at Ser-21 at the onset of mitosis drives lamin disassembly and nuclear envelope breakdown.

The protein resides in the nucleus lamina. Its subcellular location is the nucleus envelope. It localises to the nucleus. The protein localises to the nucleoplasm. It is found in the nucleus matrix. Its function is as follows. Lamins are intermediate filament proteins that assemble into a filamentous meshwork, and which constitute the major components of the nuclear lamina, a fibrous layer on the nucleoplasmic side of the inner nuclear membrane. Lamins provide a framework for the nuclear envelope, bridging the nuclear envelope and chromatin, thereby playing an important role in nuclear assembly, chromatin organization, nuclear membrane and telomere dynamics. The structural integrity of the lamina is strictly controlled by the cell cycle, as seen by the disintegration and formation of the nuclear envelope in prophase and telophase, respectively. This Xenopus laevis (African clawed frog) protein is Lamin-B3 (lmnb3.L).